We begin with the raw amino-acid sequence, 307 residues long: NADH-ubiquinone oxidoreductase chain 2 (307 aa).

The next 10 membrane-spanning stretches (helical) occupy residues 1 to 21 (MTLQ…LSMT), 25 to 45 (WIII…YYML), 58 to 78 (YFLI…YIFV), 88 to 108 (FIFI…FWII), 119 to 139 (IGIV…HMGC), 144 to 164 (MLNL…LIGM), 193 to 213 (LFKY…FLYL), 217 to 237 (MSIS…LFIG), 250 to 270 (LWFI…VYYL), and 287 to 307 (HYKM…LFLT).

This sequence belongs to the complex I subunit 2 family.

It localises to the mitochondrion inner membrane. It catalyses the reaction a ubiquinone + NADH + 5 H(+)(in) = a ubiquinol + NAD(+) + 4 H(+)(out). Functionally, core subunit of the mitochondrial membrane respiratory chain NADH dehydrogenase (Complex I) that is believed to belong to the minimal assembly required for catalysis. Complex I functions in the transfer of electrons from NADH to the respiratory chain. The immediate electron acceptor for the enzyme is believed to be ubiquinone. The sequence is that of NADH-ubiquinone oxidoreductase chain 2 (ND2) from Albinaria caerulea (Land snail).